Consider the following 197-residue polypeptide: ATP-dependent Clp protease proteolytic subunit (197 aa).

Residue S98 is the Nucleophile of the active site. The active site involves H123.

Belongs to the peptidase S14 family. Fourteen ClpP subunits assemble into 2 heptameric rings which stack back to back to give a disk-like structure with a central cavity, resembling the structure of eukaryotic proteasomes.

It localises to the cytoplasm. It catalyses the reaction Hydrolysis of proteins to small peptides in the presence of ATP and magnesium. alpha-casein is the usual test substrate. In the absence of ATP, only oligopeptides shorter than five residues are hydrolyzed (such as succinyl-Leu-Tyr-|-NHMec, and Leu-Tyr-Leu-|-Tyr-Trp, in which cleavage of the -Tyr-|-Leu- and -Tyr-|-Trp bonds also occurs).. Functionally, cleaves peptides in various proteins in a process that requires ATP hydrolysis. Has a chymotrypsin-like activity. Plays a major role in the degradation of misfolded proteins. This chain is ATP-dependent Clp protease proteolytic subunit, found in Natranaerobius thermophilus (strain ATCC BAA-1301 / DSM 18059 / JW/NM-WN-LF).